We begin with the raw amino-acid sequence, 428 residues long: Enolase (428 aa).

Q165 contacts (2R)-2-phosphoglycerate. E207 serves as the catalytic Proton donor. Residues D244, E283, and D310 each coordinate Mg(2+). Positions 335, 364, 365, and 386 each coordinate (2R)-2-phosphoglycerate. The Proton acceptor role is filled by K335.

Belongs to the enolase family. The cofactor is Mg(2+).

It localises to the cytoplasm. It is found in the secreted. The protein resides in the cell surface. It catalyses the reaction (2R)-2-phosphoglycerate = phosphoenolpyruvate + H2O. It functions in the pathway carbohydrate degradation; glycolysis; pyruvate from D-glyceraldehyde 3-phosphate: step 4/5. Catalyzes the reversible conversion of 2-phosphoglycerate (2-PG) into phosphoenolpyruvate (PEP). It is essential for the degradation of carbohydrates via glycolysis. In Chlamydia pneumoniae (Chlamydophila pneumoniae), this protein is Enolase.